We begin with the raw amino-acid sequence, 474 residues long: Glutamate--tRNA ligase 1 (474 aa).

The short motif at 11–21 (PSPTGFLHIGG) is the 'HIGH' region element. Over residues 113–133 (TARAEGRAPRYDGRWRDRDPS) the composition is skewed to basic and acidic residues. Residues 113–136 (TARAEGRAPRYDGRWRDRDPSEAP) are disordered. Residues 240–244 (KLSKR) carry the 'KMSKS' region motif. Position 243 (Lys-243) interacts with ATP.

The protein belongs to the class-I aminoacyl-tRNA synthetase family. Glutamate--tRNA ligase type 1 subfamily. As to quaternary structure, monomer.

Its subcellular location is the cytoplasm. The catalysed reaction is tRNA(Glu) + L-glutamate + ATP = L-glutamyl-tRNA(Glu) + AMP + diphosphate. In terms of biological role, catalyzes the attachment of glutamate to tRNA(Glu) in a two-step reaction: glutamate is first activated by ATP to form Glu-AMP and then transferred to the acceptor end of tRNA(Glu). This chain is Glutamate--tRNA ligase 1, found in Methylorubrum extorquens (strain PA1) (Methylobacterium extorquens).